A 502-amino-acid polypeptide reads, in one-letter code: MSELRDTRLEKCQALSDLGQGPYALNFEPTHRMAALHEAHADLPNGEEREVTVSVAGRVMTRRVMGKLAFFTLADETGTIQLFLEKAGLEAQQEGWFKQITGLVDGGDWLGVSGTLRRTDRGELSVKVSDWRMLTKALQPLPDKWHGLADVEKRYRQRYLDLIVSPDSRETFRRRARLVSGIRRWLDQRDFLEIETPVLQSEPGGADARPFETHHNALDLPLTLRIATELHLKRLVVGGFERVYELGRIFRNEGVSTRHNPEFTSVEIYQAYSDYIGMMELTEQMVSAVCQEVCGSCQITYQDTEIDLSPPWRRATMHELVEEATGLDFNSFSSREAAAVAMTGKGLHAPELADSVGRLLNEAFEQAVETTLIQPTFVTDYPVEISPLARPHRSKPGLVERFELFIVGREHANAFSELTDPVDQRQRLEAQQARKAAGDLEAQGLDEDFVTALEVGMPPTGGLGIGIDRLVMLLTDSPSIRDVIAFPLLRPEPRAADAPAMG.

Mg(2+) contacts are provided by Glu-403 and Glu-410.

The protein belongs to the class-II aminoacyl-tRNA synthetase family. As to quaternary structure, homodimer. The cofactor is Mg(2+).

The protein resides in the cytoplasm. It carries out the reaction tRNA(Lys) + L-lysine + ATP = L-lysyl-tRNA(Lys) + AMP + diphosphate. In Parasynechococcus marenigrum (strain WH8102), this protein is Lysine--tRNA ligase.